Consider the following 141-residue polypeptide: ATP synthase epsilon chain (141 aa).

The protein belongs to the ATPase epsilon chain family. In terms of assembly, F-type ATPases have 2 components, CF(1) - the catalytic core - and CF(0) - the membrane proton channel. CF(1) has five subunits: alpha(3), beta(3), gamma(1), delta(1), epsilon(1). CF(0) has three main subunits: a, b and c.

Its subcellular location is the cell inner membrane. Produces ATP from ADP in the presence of a proton gradient across the membrane. The protein is ATP synthase epsilon chain of Thioalkalivibrio sulfidiphilus (strain HL-EbGR7).